Here is a 274-residue protein sequence, read N- to C-terminus: Penicillin-insensitive murein endopeptidase (274 aa).

Positions methionine 1 to alanine 19 are cleaved as a signal peptide. Intrachain disulfides connect cysteine 44-cysteine 265, cysteine 187-cysteine 235, and cysteine 216-cysteine 223. Histidine 110, histidine 113, aspartate 120, aspartate 147, histidine 150, and histidine 211 together coordinate Zn(2+). Positions aspartate 225–leucine 274 are disordered.

The protein belongs to the peptidase M74 family. In terms of assembly, dimer. It depends on Zn(2+) as a cofactor.

It is found in the periplasm. Its function is as follows. Murein endopeptidase that cleaves the D-alanyl-meso-2,6-diamino-pimelyl amide bond that connects peptidoglycan strands. Likely plays a role in the removal of murein from the sacculus. The polypeptide is Penicillin-insensitive murein endopeptidase (Salmonella agona (strain SL483)).